The primary structure comprises 29 residues: Conotoxin pr6a (29 aa).

Cystine bridges form between Cys2/Cys20, Cys9/Cys24, and Cys19/Cys28.

Expressed by the venom duct.

The protein resides in the secreted. Functionally, intraperitoneal injection into fish (1 nmol) provokes hyperactivity and erratic swimming in various directions after 14 minutes. This chain is Conotoxin pr6a, found in Conus parius (Cone snail).